The primary structure comprises 453 residues: Glutamyl-tRNA(Gln) amidotransferase subunit A (453 aa).

Active-site charge relay system residues include Lys-53 and Ser-128. Ser-152 acts as the Acyl-ester intermediate in catalysis.

The protein belongs to the amidase family. GatA subfamily. Heterotrimer of A, B and C subunits.

It carries out the reaction L-glutamyl-tRNA(Gln) + L-glutamine + ATP + H2O = L-glutaminyl-tRNA(Gln) + L-glutamate + ADP + phosphate + H(+). Its function is as follows. Allows the formation of correctly charged Gln-tRNA(Gln) through the transamidation of misacylated Glu-tRNA(Gln) in organisms which lack glutaminyl-tRNA synthetase. The reaction takes place in the presence of glutamine and ATP through an activated gamma-phospho-Glu-tRNA(Gln). The chain is Glutamyl-tRNA(Gln) amidotransferase subunit A from Helicobacter pylori (strain P12).